Reading from the N-terminus, the 869-residue chain is DNA mismatch repair protein MutS (869 aa).

Residue 618–625 coordinates ATP; the sequence is GPNMGGKS.

This sequence belongs to the DNA mismatch repair MutS family.

Its function is as follows. This protein is involved in the repair of mismatches in DNA. It is possible that it carries out the mismatch recognition step. This protein has a weak ATPase activity. The chain is DNA mismatch repair protein MutS from Zymomonas mobilis subsp. mobilis (strain ATCC 31821 / ZM4 / CP4).